Consider the following 208-residue polypeptide: Uracil phosphoribosyltransferase (208 aa).

5-phospho-alpha-D-ribose 1-diphosphate contacts are provided by residues Arg-78, Arg-103, and 130–138; that span reads DPMLATGGS. Residues Ile-193 and 198–200 each bind uracil; that span reads GDA. Residue Asp-199 participates in 5-phospho-alpha-D-ribose 1-diphosphate binding.

The protein belongs to the UPRTase family. Mg(2+) serves as cofactor.

It carries out the reaction UMP + diphosphate = 5-phospho-alpha-D-ribose 1-diphosphate + uracil. It functions in the pathway pyrimidine metabolism; UMP biosynthesis via salvage pathway; UMP from uracil: step 1/1. With respect to regulation, allosterically activated by GTP. Its function is as follows. Catalyzes the conversion of uracil and 5-phospho-alpha-D-ribose 1-diphosphate (PRPP) to UMP and diphosphate. The chain is Uracil phosphoribosyltransferase from Trichlorobacter lovleyi (strain ATCC BAA-1151 / DSM 17278 / SZ) (Geobacter lovleyi).